A 70-amino-acid chain; its full sequence is Large ribosomal subunit protein bL31 (70 aa).

The Zn(2+) site is built by C16, C18, C37, and C40.

This sequence belongs to the bacterial ribosomal protein bL31 family. Type A subfamily. In terms of assembly, part of the 50S ribosomal subunit. Requires Zn(2+) as cofactor.

Functionally, binds the 23S rRNA. The chain is Large ribosomal subunit protein bL31 from Shewanella halifaxensis (strain HAW-EB4).